Here is a 620-residue protein sequence, read N- to C-terminus: Threonine--tRNA ligase (620 aa).

Positions 1 to 141 (MKMLLIHSDY…LSRKIVAKEE (141 aa)) are editing domain. Positions 197-496 (PHVKFIKEKD…AEKGNAPMLP (300 aa)) are catalytic. Positions 289, 341, and 465 each coordinate Zn(2+).

It belongs to the class-II aminoacyl-tRNA synthetase family. As to quaternary structure, homodimer. The cofactor is Zn(2+).

The protein resides in the cytoplasm. The catalysed reaction is tRNA(Thr) + L-threonine + ATP = L-threonyl-tRNA(Thr) + AMP + diphosphate + H(+). Its activity is regulated as follows. Not inhibited by 1 uM borrelidin (BN); probably does not bind BN. Catalyzes the attachment of threonine to tRNA(Thr) in a two-step reaction: L-threonine is first activated by ATP to form Thr-AMP and then transferred to the acceptor end of tRNA(Thr). Also activates L-serine, but does not detectably transfer it to tRNA(Thr). Edits incorrectly charged L-seryl-tRNA(Thr) via its editing domain. Has no activity on correctly acylated L-seryl-tRNA(Ser) or L-threonyl-tRNA(Thr). Deacylates correctly charged glycyl-tRNA(Gly), but not glycyl-tRNA(Gly)(2'-dA76) (the terminal 2'-OH of tRNA adenine 76 has been dehydroxylated) nor the 2'-fluoro tRNA derivative, strongly suggesting the editing function is tRNA catalyzed. The polypeptide is Threonine--tRNA ligase (Methanocaldococcus jannaschii (strain ATCC 43067 / DSM 2661 / JAL-1 / JCM 10045 / NBRC 100440) (Methanococcus jannaschii)).